The following is a 217-amino-acid chain: Urease accessory protein UreF (217 aa).

The protein belongs to the UreF family. In terms of assembly, ureD, UreF and UreG form a complex that acts as a GTP-hydrolysis-dependent molecular chaperone, activating the urease apoprotein by helping to assemble the nickel containing metallocenter of UreC. The UreE protein probably delivers the nickel.

The protein localises to the cytoplasm. In terms of biological role, required for maturation of urease via the functional incorporation of the urease nickel metallocenter. This Ruegeria pomeroyi (strain ATCC 700808 / DSM 15171 / DSS-3) (Silicibacter pomeroyi) protein is Urease accessory protein UreF.